The chain runs to 849 residues: MLWALWPRWLADKMLPLLGAVLLQKREKRGPLWRHWRRETYPYYDLQVKVLRATNIRGTDLLSKADCYVQLWLPTASPSPAQTRIVANCSDPEWNETFHYQIHGAVKNVLELTLYDKDILGSDQLSLLLFDLRSLKCGQPHKHTFPLNHQDSQELQVEFVLEKSQVPASEVITNGVLVAHPCLRIQGTLRGDGTAPREEYGSRQLQLAVPGAYEKPQLLPLQPPTEPGLPPTFTFHVNPVLSSRLHVELMELLAAVQSGPSAELEAQTSKLGEGGILLSSLPLGQEEQCSVALGEGQEVALSMKVEMSSGDLDLRLGFDLSDGEQEFLDRRKQVVSKALQQVLGLSEALDSGQVPVVAVLGSGGGTRAMSSLYGSLAGLQELGLLDTVTYLSGVSGSTWCISTLYRDPAWSQVALQGPIERAQVHVCSSKMGALSTERLQYYTQELGVRERSGHSVSLIDLWGLLVEYLLYQEENPAKLSDQQEAVRQGQNPYPIYTSVNVRTNLSGEDFAEWCEFTPYEVGFPKYGAYVPTELFGSELFMGRLLQLQPEPRICYLQGMWGSAFATSLDEIFLKTAGSGLSFLEWYRGSVNITDDCQKPQLHNPSRLRTRLLTPQGPFSQAVLDIFTSRFTSAQSFNFTRGLCLHKDYVAGREFVAWKDTHPDAFPNQLTPMRDCLYLVDGGFAINSPFPLALLPQRAVDLILSFDYSLEAPFEVLKMTEKYCLDRGIPFPSIEVGPEDMEEARECYLFAKAEDPRSPIVLHFPLVNRTFRTHLAPGVERQTAEEKAFGDFVINRPDTPYGMMNFTYEPQDFYRLVALSRYNVLNNVETLKCALQLALDRHQARERAGA.

The C2 domain maps to 27 to 145 (EKRGPLWRHW…KCGQPHKHTF (119 aa)). 5 residues coordinate Ca(2+): aspartate 60, aspartate 66, aspartate 116, aspartate 118, and aspartate 123. One can recognise a PLA2c domain in the interval 306–849 (EMSSGDLDLR…RHQARERAGA (544 aa)). Catalysis depends on serine 395, which acts as the Nucleophile. The Proton acceptor role is filled by aspartate 680.

The cofactor is Ca(2+). Expressed in myocardium (at protein level).

The protein resides in the cytoplasm. It localises to the cytosol. The protein localises to the cell membrane. Its subcellular location is the mitochondrion. The catalysed reaction is a 1,2-diacyl-sn-glycero-3-phosphocholine + H2O = a 1-acyl-sn-glycero-3-phosphocholine + a fatty acid + H(+). The enzyme catalyses a 1-O-alkyl-2-acyl-sn-glycero-3-phosphocholine + H2O = a 1-O-alkyl-sn-glycero-3-phosphocholine + a fatty acid + H(+). It carries out the reaction 1-hexadecanoyl-2-(9Z-octadecenoyl)-sn-glycero-3-phosphocholine + H2O = 2-(9Z-octadecenoyl)-sn-glycero-3-phosphocholine + hexadecanoate + H(+). It catalyses the reaction 1-hexadecanoyl-2-(9Z,12Z-octadecadienoyl)-sn-glycero-3-phosphocholine + H2O = (9Z,12Z)-octadecadienoate + 1-hexadecanoyl-sn-glycero-3-phosphocholine + H(+). The catalysed reaction is 1-hexadecanoyl-2-(5Z,8Z,11Z,14Z-eicosatetraenoyl)-sn-glycero-3-phosphocholine + H2O = 1-hexadecanoyl-sn-glycero-3-phosphocholine + (5Z,8Z,11Z,14Z)-eicosatetraenoate + H(+). The enzyme catalyses 1-hexadecanoyl-2-(9Z,12Z-octadecadienoyl)-sn-glycero-3-phosphoethanolamine + H2O = 1-hexadecanoyl-sn-glycero-3-phosphoethanolamine + (9Z,12Z)-octadecadienoate + H(+). It carries out the reaction 1-hexadecanoyl-2-(5Z,8Z,11Z,14Z-eicosatetraenoyl)-sn-glycero-3-phosphoethanolamine + H2O = 1-hexadecanoyl-sn-glycero-3-phosphoethanolamine + (5Z,8Z,11Z,14Z)-eicosatetraenoate + H(+). It catalyses the reaction 1-(5Z,8Z,11Z,14Z-eicosatetraenoyl)-2-O-hexadecyl-sn-glycero-3-phosphocholine + H2O = 2-O-hexadecyl-sn-glycero-3-phosphocholine + (5Z,8Z,11Z,14Z)-eicosatetraenoate + H(+). The catalysed reaction is 1-O-hexadecyl-2-(5Z,8Z,11Z,14Z)-eicosatetraenoyl-sn-glycero-3-phosphocholine + H2O = 1-O-hexadecyl-sn-glycero-3-phosphocholine + (5Z,8Z,11Z,14Z)-eicosatetraenoate + H(+). The enzyme catalyses 1-hexadecanoyl-sn-glycero-3-phosphocholine + H2O = sn-glycerol 3-phosphocholine + hexadecanoate + H(+). Stimulated by cytosolic Ca(2+). Its function is as follows. Has calcium-dependent phospholipase and lysophospholipase activities with a potential role in membrane lipid remodeling and biosynthesis of lipid mediators. Preferentially hydrolyzes the ester bond of the fatty acyl group attached at sn-2 position of phospholipids (phospholipase A2 activity). Selectively hydrolyzes sn-2 arachidonoyl group from membrane phospholipids, providing the precursor for eicosanoid biosynthesis. In myocardial mitochondria, plays a major role in arachidonate release that is metabolically channeled to the formation of cardioprotective eicosanoids, epoxyeicosatrienoates (EETs). The chain is Cytosolic phospholipase A2 zeta (PLA2G4F) from Homo sapiens (Human).